The sequence spans 913 residues: DNA mismatch repair protein MutS (913 aa).

The disordered stretch occupies residues 18 to 50; the sequence is NNKQKEKTKIPEDLSLEDLKKESQKRPRQRKNS. A compositionally biased stretch (basic and acidic residues) spans 19–42; the sequence is NKQKEKTKIPEDLSLEDLKKESQK. 720–727 is an ATP binding site; that stretch reads GPNASGKS.

Belongs to the DNA mismatch repair MutS family.

In terms of biological role, this protein is involved in the repair of mismatches in DNA. It is possible that it carries out the mismatch recognition step. This protein has a weak ATPase activity. This Prochlorococcus marinus (strain MIT 9301) protein is DNA mismatch repair protein MutS.